The sequence spans 592 residues: Sodium- and chloride-dependent transporter XTRP3 (592 aa).

Residues 1–5 are Cytoplasmic-facing; that stretch reads MEKAR. Residues 6 to 26 form a helical membrane-spanning segment; the sequence is PLWANSLQFVFACISYAVGLG. The Extracellular segment spans residues 27–42; that stretch reads NVWRFPYLCQMYGGGS. Residues 43 to 63 traverse the membrane as a helical segment; the sequence is FLVPYIIMLIVEGMPLLYLEL. At 64 to 79 the chain is on the cytoplasmic side; that stretch reads AVGQRMRQGSIGAWRT. Residues 80-100 traverse the membrane as a helical segment; it reads ISPYLSGVGVASVVVSFFLSM. At 101–165 the chain is on the extracellular side; that stretch reads YYNVINAWAF…ISPSLQENGG (65 aa). N-linked (GlcNAc...) asparagine glycosylation occurs at N131. Residues 166 to 186 form a helical membrane-spanning segment; sequence VQWEPALCLLLAWLVVYLCIL. The Cytoplasmic portion of the chain corresponds to 187 to 194; it reads RGTESTGK. A helical transmembrane segment spans residues 195–215; sequence VVYFTASLPYCVLIIYLIRGL. Residues 216-241 are Extracellular-facing; the sequence is TLHGATNGLMYMFTPKIEQLANPKAW. A helical transmembrane segment spans residues 242 to 262; that stretch reads INAATQIFFSLGLGFGSLIAF. Residues 263–276 are Cytoplasmic-facing; it reads ASYNEPSNNCQKHA. A helical transmembrane segment spans residues 277 to 297; sequence IIVSLINSFTSIFASIVTFSI. Over 298–389 the chain is Extracellular; sequence YGFKATFNYE…EAIKNMEVSQ (92 aa). Residue N357 is glycosylated (N-linked (GlcNAc...) asparagine). The helical transmembrane segment at 390–410 threads the bilayer; the sequence is LWSVLYFFMLLMLGIGSMLGN. The Cytoplasmic portion of the chain corresponds to 411–431; that stretch reads TAAILTPLTDSKIISSHLPKE. The helical transmembrane segment at 432 to 452 threads the bilayer; it reads AISGLVCLVNCAIGMVFTMEA. The Extracellular portion of the chain corresponds to 453–465; that stretch reads GNYWFDIFNDYAA. A helical transmembrane segment spans residues 466-486; it reads TLSLLLIVLVETIAVCYVYGL. Residues 487–504 lie on the Cytoplasmic side of the membrane; it reads RRFESDLKAMTGRAVSWY. The chain crosses the membrane as a helical span at residues 505-525; that stretch reads WKVMWAGVSPLLIVSLFVFYL. The Extracellular segment spans residues 526–554; sequence SDYILTGTLKYQAWDASQGQLVTKDYPAY. The helical transmembrane segment at 555-575 threads the bilayer; sequence ALAVIGLLVASSTMCIPLAAL. Over 576–592 the chain is Cytoplasmic; the sequence is GTFVQRRLKRGDADPVA.

This sequence belongs to the sodium:neurotransmitter symporter (SNF) (TC 2.A.22) family. SLC6A20 subfamily. As to expression, kidney and small intestine. Expressed in the S3 segment of the proximal tubule. Expressed in neurons.

Its subcellular location is the apical cell membrane. It carries out the reaction L-proline(out) + chloride(out) + 2 Na(+)(out) = L-proline(in) + chloride(in) + 2 Na(+)(in). The catalysed reaction is L-pipecolate(out) + chloride(out) + 2 Na(+)(out) = L-pipecolate(in) + chloride(in) + 2 Na(+)(in). It catalyses the reaction sarcosine(out) + chloride(out) + 2 Na(+)(out) = sarcosine(in) + chloride(in) + 2 Na(+)(in). The enzyme catalyses N-methyl-L-proline(out) + chloride(out) + 2 Na(+)(out) = N-methyl-L-proline(in) + chloride(in) + 2 Na(+)(in). It carries out the reaction 2-methyl-2-(methylamino)propanoate(out) + chloride(out) + 2 Na(+)(out) = 2-methyl-2-(methylamino)propanoate(in) + chloride(in) + 2 Na(+)(in). The catalysed reaction is glycine betaine(out) + chloride(out) + 2 Na(+)(out) = glycine betaine(in) + chloride(in) + 2 Na(+)(in). It catalyses the reaction glycine(out) + chloride(out) + 2 Na(+)(out) = glycine(in) + chloride(in) + 2 Na(+)(in). Functionally, mediates the Na(+)- and Cl(-)-dependent uptake of imino acids such as L-proline, N-methyl-L-proline and pipecolate as well as N-methylated amino acids. Also transports glycine, regulates proline and glycine homeostasis in the brain playing a role in the modulation of NMDAR currents. This is Sodium- and chloride-dependent transporter XTRP3 from Homo sapiens (Human).